The chain runs to 395 residues: Elongation factor Tu (395 aa).

Residues 10-204 (KPHVNIGTIG…TVDSYIPEPA (195 aa)) enclose the tr-type G domain. Residues 19–26 (GHVDHGKT) form a G1 region. A GTP-binding site is contributed by 19–26 (GHVDHGKT). Mg(2+) is bound at residue Thr-26. Residues 60–64 (GITIN) are G2. Positions 81-84 (DAPG) are G3. GTP contacts are provided by residues 81–85 (DAPGH) and 136–139 (NKTD). Positions 136 to 139 (NKTD) are G4. The interval 174–176 (SAL) is G5.

The protein belongs to the TRAFAC class translation factor GTPase superfamily. Classic translation factor GTPase family. EF-Tu/EF-1A subfamily. As to quaternary structure, monomer.

It is found in the cytoplasm. It catalyses the reaction GTP + H2O = GDP + phosphate + H(+). Its function is as follows. GTP hydrolase that promotes the GTP-dependent binding of aminoacyl-tRNA to the A-site of ribosomes during protein biosynthesis. This is Elongation factor Tu from Leuconostoc mesenteroides subsp. mesenteroides (strain ATCC 8293 / DSM 20343 / BCRC 11652 / CCM 1803 / JCM 6124 / NCDO 523 / NBRC 100496 / NCIMB 8023 / NCTC 12954 / NRRL B-1118 / 37Y).